We begin with the raw amino-acid sequence, 961 residues long: Glycine dehydrogenase (decarboxylating) (961 aa).

Lys702 is subject to N6-(pyridoxal phosphate)lysine.

This sequence belongs to the GcvP family. In terms of assembly, the glycine cleavage system is composed of four proteins: P, T, L and H. Pyridoxal 5'-phosphate is required as a cofactor.

The enzyme catalyses N(6)-[(R)-lipoyl]-L-lysyl-[glycine-cleavage complex H protein] + glycine + H(+) = N(6)-[(R)-S(8)-aminomethyldihydrolipoyl]-L-lysyl-[glycine-cleavage complex H protein] + CO2. Its function is as follows. The glycine cleavage system catalyzes the degradation of glycine. The P protein binds the alpha-amino group of glycine through its pyridoxal phosphate cofactor; CO(2) is released and the remaining methylamine moiety is then transferred to the lipoamide cofactor of the H protein. The sequence is that of Glycine dehydrogenase (decarboxylating) from Rhodopseudomonas palustris (strain BisA53).